Reading from the N-terminus, the 347-residue chain is NADH-ubiquinone oxidoreductase chain 2 (347 aa).

Transmembrane regions (helical) follow at residues 3 to 23 (PIVF…VMMS), 25 to 45 (HWLM…PILM), 59 to 79 (YFLT…INLM), 111 to 131 (FHFW…LILL), 149 to 169 (INLD…GWGG), 178 to 198 (IMAY…TYNP), 201 to 221 (TMLN…LLML), 242 to 262 (SLIL…GFIP), 274 to 294 (NSII…YFYL), and 325 to 345 (LLPT…TMSI).

The protein belongs to the complex I subunit 2 family. In terms of assembly, core subunit of respiratory chain NADH dehydrogenase (Complex I) which is composed of 45 different subunits. Interacts with TMEM242.

It is found in the mitochondrion inner membrane. It carries out the reaction a ubiquinone + NADH + 5 H(+)(in) = a ubiquinol + NAD(+) + 4 H(+)(out). Functionally, core subunit of the mitochondrial membrane respiratory chain NADH dehydrogenase (Complex I) which catalyzes electron transfer from NADH through the respiratory chain, using ubiquinone as an electron acceptor. Essential for the catalytic activity and assembly of complex I. This Rhinoceros unicornis (Greater Indian rhinoceros) protein is NADH-ubiquinone oxidoreductase chain 2.